The sequence spans 118 residues: Ribonuclease P protein component (118 aa).

This sequence belongs to the RnpA family. In terms of assembly, consists of a catalytic RNA component (M1 or rnpB) and a protein subunit.

The enzyme catalyses Endonucleolytic cleavage of RNA, removing 5'-extranucleotides from tRNA precursor.. Functionally, RNaseP catalyzes the removal of the 5'-leader sequence from pre-tRNA to produce the mature 5'-terminus. It can also cleave other RNA substrates such as 4.5S RNA. The protein component plays an auxiliary but essential role in vivo by binding to the 5'-leader sequence and broadening the substrate specificity of the ribozyme. In Shewanella oneidensis (strain ATCC 700550 / JCM 31522 / CIP 106686 / LMG 19005 / NCIMB 14063 / MR-1), this protein is Ribonuclease P protein component.